We begin with the raw amino-acid sequence, 330 residues long: 4-hydroxythreonine-4-phosphate dehydrogenase (330 aa).

His-135 and Thr-136 together coordinate substrate. The a divalent metal cation site is built by His-165, His-210, and His-266. Positions 274, 283, and 292 each coordinate substrate.

Belongs to the PdxA family. Homodimer. Zn(2+) is required as a cofactor. The cofactor is Mg(2+). It depends on Co(2+) as a cofactor.

Its subcellular location is the cytoplasm. The catalysed reaction is 4-(phosphooxy)-L-threonine + NAD(+) = 3-amino-2-oxopropyl phosphate + CO2 + NADH. The protein operates within cofactor biosynthesis; pyridoxine 5'-phosphate biosynthesis; pyridoxine 5'-phosphate from D-erythrose 4-phosphate: step 4/5. Its function is as follows. Catalyzes the NAD(P)-dependent oxidation of 4-(phosphooxy)-L-threonine (HTP) into 2-amino-3-oxo-4-(phosphooxy)butyric acid which spontaneously decarboxylates to form 3-amino-2-oxopropyl phosphate (AHAP). In Vibrio cholerae serotype O1 (strain ATCC 39315 / El Tor Inaba N16961), this protein is 4-hydroxythreonine-4-phosphate dehydrogenase.